Reading from the N-terminus, the 295-residue chain is Pyridoxal 5'-phosphate synthase subunit PdxS (295 aa).

Residue aspartate 25 participates in D-ribose 5-phosphate binding. Lysine 82 functions as the Schiff-base intermediate with D-ribose 5-phosphate in the catalytic mechanism. Glycine 154 provides a ligand contact to D-ribose 5-phosphate. Residue arginine 166 coordinates D-glyceraldehyde 3-phosphate. Residues glycine 215 and 236–237 (GS) contribute to the D-ribose 5-phosphate site.

Belongs to the PdxS/SNZ family. In terms of assembly, in the presence of PdxT, forms a dodecamer of heterodimers.

The enzyme catalyses aldehydo-D-ribose 5-phosphate + D-glyceraldehyde 3-phosphate + L-glutamine = pyridoxal 5'-phosphate + L-glutamate + phosphate + 3 H2O + H(+). It functions in the pathway cofactor biosynthesis; pyridoxal 5'-phosphate biosynthesis. Catalyzes the formation of pyridoxal 5'-phosphate from ribose 5-phosphate (RBP), glyceraldehyde 3-phosphate (G3P) and ammonia. The ammonia is provided by the PdxT subunit. Can also use ribulose 5-phosphate and dihydroxyacetone phosphate as substrates, resulting from enzyme-catalyzed isomerization of RBP and G3P, respectively. The protein is Pyridoxal 5'-phosphate synthase subunit PdxS of Bacillus cereus (strain 03BB102).